The following is a 321-amino-acid chain: Beta-ketoacyl-[acyl-carrier-protein] synthase III (321 aa).

Catalysis depends on residues Cys-114 and His-248. The tract at residues 249 to 253 is ACP-binding; that stretch reads QANIR. Asn-278 is a catalytic residue.

Belongs to the thiolase-like superfamily. FabH family. Homodimer.

The protein resides in the cytoplasm. It catalyses the reaction malonyl-[ACP] + acetyl-CoA + H(+) = 3-oxobutanoyl-[ACP] + CO2 + CoA. The protein operates within lipid metabolism; fatty acid biosynthesis. Functionally, catalyzes the condensation reaction of fatty acid synthesis by the addition to an acyl acceptor of two carbons from malonyl-ACP. Catalyzes the first condensation reaction which initiates fatty acid synthesis and may therefore play a role in governing the total rate of fatty acid production. Possesses both acetoacetyl-ACP synthase and acetyl transacylase activities. Its substrate specificity determines the biosynthesis of branched-chain and/or straight-chain of fatty acids. This is Beta-ketoacyl-[acyl-carrier-protein] synthase III from Methylococcus capsulatus (strain ATCC 33009 / NCIMB 11132 / Bath).